Consider the following 84-residue polypeptide: MRTTVTLDDDVEQLVRRRMAERQVSFKKALNDAIRDGASGRPAPSHFSTRTADLGVPAVNLDRALQLAADLEDEELVRRQRRGS.

In terms of biological role, probable antitoxin component of a type II toxin-antitoxin (TA) system. Its putative cognate toxin is VapC37. The polypeptide is Putative antitoxin VapB37 (vapB37) (Mycobacterium tuberculosis (strain CDC 1551 / Oshkosh)).